Reading from the N-terminus, the 488-residue chain is Microtubule-destabilizing protein 60 (488 aa).

Polar residues predominate over residues 25 to 56; sequence AQEVSRFSENSNPNFVSHSTPLEKSSKSSAQK. Disordered stretches follow at residues 25–71, 262–304, and 436–457; these read AQEV…VFSP, HASV…TKKQ, and DRPF…PKFN. Residues 264–280 are compositionally biased toward low complexity; sequence SVSSSWDNSVSSLNSNG.

Belongs to the TPX2 family.

It is found in the cytoplasm. The protein localises to the cytoskeleton. Its function is as follows. Binds directly to microtubules. Microtubule-destabilizing protein involved in the PIF3-dependent positive regulation of hypocotyl cell elongation via the modulation of cortical microtubules dynamic in response to light and ethylene signaling. Promotes submergence-induced and ethylene-dependent underwater hypocotyl elongation. The sequence is that of Microtubule-destabilizing protein 60 from Arabidopsis thaliana (Mouse-ear cress).